The following is a 252-amino-acid chain: Probable transcriptional regulatory protein Npun_R5651 (252 aa).

Belongs to the TACO1 family.

The protein localises to the cytoplasm. The protein is Probable transcriptional regulatory protein Npun_R5651 of Nostoc punctiforme (strain ATCC 29133 / PCC 73102).